A 765-amino-acid chain; its full sequence is Glucosamine inositolphosphorylceramide transferase 1 (765 aa).

3 consecutive transmembrane segments (helical) span residues 43–63 (FFAS…WFVF), 394–414 (VILG…LGFL), and 476–496 (MGKF…CVGV). Substrate is bound by residues Asn-553, 577–582 (NSLNNR), 598–600 (DDD), Arg-628, and 683–687 (FNCED). Asp-600 is a binding site for Mn(2+). A disulfide bridge connects residues Cys-685 and Cys-738. The active site involves Asp-687.

The protein belongs to the glycosyltransferase 64 family. Mn(2+) serves as cofactor. As to expression, specifically and highly expressed in developing embryos and mature seeds. Also detected at low levels in stigma and pollen.

The protein resides in the membrane. It carries out the reaction an N-(2R-hydroxy-very-long-chain fatty acyl)-(R)-4-hydroxysphingoid base + a 1,2-diacyl-sn-glycero-3-phospho-(1D-myo-inositol) = a 1D-myo-inositol-1-phospho-N-[(R)-2-hydroxy-very-long-chain fatty acyl]-(R)-4-hydroxysphingoid base + a 1,2-diacyl-sn-glycerol. The protein operates within sphingolipid metabolism. Glycosyltransferase that mediates the glycosylation of glycosylinositol phosphorylceramides (GIPCs), the major sphingolipids in the plasma membrane; acts as a HexN(Ac)-specific GIPC sugar transferase and accepts glucosamine (GlcN) and N-acetylglucosamine (GlcNAc) as the sugar unit. Responsible for the glycosylation of a subgroup of GIPCs found in seeds and pollen that contain GlcNAc and GlcN (GlcN(Ac)). Maybe involved in the maintenance of cell-cell adhesion. In Arabidopsis thaliana (Mouse-ear cress), this protein is Glucosamine inositolphosphorylceramide transferase 1.